The following is a 79-amino-acid chain: uncharacterized protein (79 aa).

It belongs to the BolA/IbaG family.

This is an uncharacterized protein from Buchnera aphidicola subsp. Baizongia pistaciae (strain Bp).